The sequence spans 233 residues: Phosphoglycolate phosphatase (233 aa).

The Nucleophile role is filled by D13. 3 residues coordinate Mg(2+): D13, D15, and D175.

This sequence belongs to the HAD-like hydrolase superfamily. CbbY/CbbZ/Gph/YieH family. Mg(2+) is required as a cofactor.

The catalysed reaction is 2-phosphoglycolate + H2O = glycolate + phosphate. The protein operates within organic acid metabolism; glycolate biosynthesis; glycolate from 2-phosphoglycolate: step 1/1. Specifically catalyzes the dephosphorylation of 2-phosphoglycolate. Is involved in the dissimilation of the intracellular 2-phosphoglycolate formed during the DNA repair of 3'-phosphoglycolate ends, a major class of DNA lesions induced by oxidative stress. In Agrobacterium fabrum (strain C58 / ATCC 33970) (Agrobacterium tumefaciens (strain C58)), this protein is Phosphoglycolate phosphatase.